Here is a 439-residue protein sequence, read N- to C-terminus: Exodeoxyribonuclease 7 large subunit (439 aa).

The protein belongs to the XseA family. Heterooligomer composed of large and small subunits.

The protein localises to the cytoplasm. The catalysed reaction is Exonucleolytic cleavage in either 5'- to 3'- or 3'- to 5'-direction to yield nucleoside 5'-phosphates.. Bidirectionally degrades single-stranded DNA into large acid-insoluble oligonucleotides, which are then degraded further into small acid-soluble oligonucleotides. The polypeptide is Exodeoxyribonuclease 7 large subunit (Haemophilus influenzae (strain ATCC 51907 / DSM 11121 / KW20 / Rd)).